The sequence spans 258 residues: Redox-sensing transcriptional repressor Rex (258 aa).

Positions 26–65 form a DNA-binding region, H-T-H motif; sequence LYLRALTALSERSVPTVSSEELAAAAGVNSAKLRKDFSYL. 100 to 105 serves as a coordination point for NAD(+); sequence GIGNLG. The disordered stretch occupies residues 219-258; the sequence is AGEEAAADGAAPPVAARKQQRSTGSADQGPDGDVPAVMPA. The segment covering 225–234 has biased composition (low complexity); sequence ADGAAPPVAA.

Belongs to the transcriptional regulatory Rex family. In terms of assembly, homodimer.

The protein localises to the cytoplasm. Modulates transcription of respiratory genes in response to changes in cellular NADH/NAD(+) redox state. Binds to the DNA sequence motif 5'-TGTGAACGCGTTCACA-3' in the promoter of the cydABCD operon. May play a general role as a sensor of cellular redox balance. In Streptomyces coelicolor (strain ATCC BAA-471 / A3(2) / M145), this protein is Redox-sensing transcriptional repressor Rex.